The following is a 122-amino-acid chain: MKQLGKHIILELWGCESQALDDQPGIEKMLVNAVKACGATLICVKTHKFSPQGVTGVAVLSESHISIHTWPELGYAAMDVFTCGEHVKPEDTIPEIEKFLKPEKTEVMDIKRGIIDDGEVKE.

Catalysis depends on S63, which acts as the Schiff-base intermediate with substrate; via pyruvic acid. The residue at position 63 (S63) is a Pyruvic acid (Ser); by autocatalysis. The active-site Proton acceptor; for processing activity is H68. C83 serves as the catalytic Proton donor; for catalytic activity.

It belongs to the prokaryotic AdoMetDC family. Type 1 subfamily. In terms of assembly, heterotetramer of two alpha and two beta chains arranged as a dimer of alpha/beta heterodimers. Requires pyruvate as cofactor. Post-translationally, is synthesized initially as an inactive proenzyme. Formation of the active enzyme involves a self-maturation process in which the active site pyruvoyl group is generated from an internal serine residue via an autocatalytic post-translational modification. Two non-identical subunits are generated from the proenzyme in this reaction, and the pyruvate is formed at the N-terminus of the alpha chain, which is derived from the carboxyl end of the proenzyme. The post-translation cleavage follows an unusual pathway, termed non-hydrolytic serinolysis, in which the side chain hydroxyl group of the serine supplies its oxygen atom to form the C-terminus of the beta chain, while the remainder of the serine residue undergoes an oxidative deamination to produce ammonia and the pyruvoyl group blocking the N-terminus of the alpha chain.

It catalyses the reaction S-adenosyl-L-methionine + H(+) = S-adenosyl 3-(methylsulfanyl)propylamine + CO2. It functions in the pathway amine and polyamine biosynthesis; S-adenosylmethioninamine biosynthesis; S-adenosylmethioninamine from S-adenosyl-L-methionine: step 1/1. Functionally, catalyzes the decarboxylation of S-adenosylmethionine to S-adenosylmethioninamine (dcAdoMet), the propylamine donor required for the synthesis of the polyamines spermine and spermidine from the diamine putrescine. The protein is S-adenosylmethionine decarboxylase proenzyme of Methanococcus maripaludis (strain DSM 14266 / JCM 13030 / NBRC 101832 / S2 / LL).